The sequence spans 403 residues: Na(+)-translocating NADH-quinone reductase subunit B (403 aa).

The next 9 membrane-spanning stretches (helical) occupy residues 56–76 (MMIT…WNTG), 121–141 (AYFL…EVLF), 163–183 (ILPP…GVVI), 220–240 (WTAV…SGGI), 265–285 (TSTL…IASW), 287–307 (IVSG…LIGS), 312–332 (MFAM…GMFF), 348–368 (WIFG…NPAF), and 371–391 (GMML…HFVV). At threonine 230 the chain carries FMN phosphoryl threonine.

The protein belongs to the NqrB/RnfD family. Composed of six subunits; NqrA, NqrB, NqrC, NqrD, NqrE and NqrF. It depends on FMN as a cofactor.

It localises to the cell inner membrane. It carries out the reaction a ubiquinone + n Na(+)(in) + NADH + H(+) = a ubiquinol + n Na(+)(out) + NAD(+). In terms of biological role, NQR complex catalyzes the reduction of ubiquinone-1 to ubiquinol by two successive reactions, coupled with the transport of Na(+) ions from the cytoplasm to the periplasm. NqrA to NqrE are probably involved in the second step, the conversion of ubisemiquinone to ubiquinol. The polypeptide is Na(+)-translocating NADH-quinone reductase subunit B (Ectopseudomonas mendocina (strain ymp) (Pseudomonas mendocina)).